The chain runs to 135 residues: Ribosome-binding factor A (135 aa).

It belongs to the RbfA family. Monomer. Binds 30S ribosomal subunits, but not 50S ribosomal subunits or 70S ribosomes.

It is found in the cytoplasm. One of several proteins that assist in the late maturation steps of the functional core of the 30S ribosomal subunit. Associates with free 30S ribosomal subunits (but not with 30S subunits that are part of 70S ribosomes or polysomes). Required for efficient processing of 16S rRNA. May interact with the 5'-terminal helix region of 16S rRNA. This is Ribosome-binding factor A from Aliivibrio salmonicida (strain LFI1238) (Vibrio salmonicida (strain LFI1238)).